The primary structure comprises 506 residues: Putative basic amino acid antiporter YfcC (506 aa).

13 consecutive transmembrane segments (helical) span residues 19–39, 107–127, 148–168, 171–191, 208–228, 231–251, 287–307, 310–330, 352–372, 398–418, 419–439, 442–462, and 485–505; these read LVII…VPVG, GTAV…GIVM, ILFI…FGMG, AVAF…DSIT, WMNP…VLSG, LRIV…MVYA, WLVL…VIVN, FIPE…IIGV, MMIA…LVGN, AVAA…VTSG, SGQA…VGVN, VTVL…PTSA, and LLGL…LMGY.

The protein to H.influenzae HI_0594. This sequence to B.subtilis YcgA.

The protein resides in the cell inner membrane. Metabolomic profiling of different yfcC over-expression and deletion strains suggests that it may affect the glyoxylate shunt. This Escherichia coli (strain K12) protein is Putative basic amino acid antiporter YfcC (yfcC).